Here is a 557-residue protein sequence, read N- to C-terminus: Potassium-transporting ATPase potassium-binding subunit (557 aa).

12 helical membrane-spanning segments follow: residues 5-25, 63-83, 132-152, 170-190, 253-273, 283-303, 329-349, 356-376, 379-399, 416-436, 484-504, and 526-546; these read GFLL…PLGS, LCAI…MLLG, GLTV…FALI, LLRI…LFFI, FVQM…FGEV, LLWA…WAEV, VLVS…AVIA, ALGG…FGGV, GLYG…LMIG, LTAL…ALAM, LLAF…MAIA, and LFVG…FIPA.

Belongs to the KdpA family. In terms of assembly, the system is composed of three essential subunits: KdpA, KdpB and KdpC.

It localises to the cell inner membrane. Functionally, part of the high-affinity ATP-driven potassium transport (or Kdp) system, which catalyzes the hydrolysis of ATP coupled with the electrogenic transport of potassium into the cytoplasm. This subunit binds the periplasmic potassium ions and delivers the ions to the membrane domain of KdpB through an intramembrane tunnel. The sequence is that of Potassium-transporting ATPase potassium-binding subunit from Escherichia coli O9:H4 (strain HS).